Reading from the N-terminus, the 134-residue chain is Probable histone H2A.3 (134 aa).

This sequence belongs to the histone H2A family. As to quaternary structure, the nucleosome is a histone octamer containing two molecules each of H2A, H2B, H3 and H4 assembled in one H3-H4 heterotetramer and two H2A-H2B heterodimers. The octamer wraps approximately 147 bp of DNA.

It is found in the nucleus. It localises to the chromosome. Its function is as follows. Core component of nucleosome. Nucleosomes wrap and compact DNA into chromatin, limiting DNA accessibility to the cellular machineries which require DNA as a template. Histones thereby play a central role in transcription regulation, DNA repair, DNA replication and chromosomal stability. DNA accessibility is regulated via a complex set of post-translational modifications of histones, also called histone code, and nucleosome remodeling. This is Probable histone H2A.3 from Oryza sativa subsp. indica (Rice).